The following is a 443-amino-acid chain: D(2) dopamine receptor (443 aa).

The Extracellular portion of the chain corresponds to 1 to 37 (MDPLNLSWYDDDLESQNWSRPFNGSEGKPGKPHYNYY). 3 N-linked (GlcNAc...) asparagine glycosylation sites follow: N5, N17, and N23. A helical transmembrane segment spans residues 38–60 (AMLLTLLIFIIVFGNVLVCMAVS). The Cytoplasmic portion of the chain corresponds to 61–70 (REKALQTTTN). A helical membrane pass occupies residues 71–93 (YLIVSLAVADLLVATLVMPWVVY). Residues 94–108 (LEVVGEWKFSRIHCD) are Extracellular-facing. A disulfide bridge connects residues C107 and C182. Residues 109–130 (IFVTLDVMMCTASILNLCAISI) traverse the membrane as a helical segment. At 131–151 (DRYTAVAMPMLYNTRYSSKRR) the chain is on the cytoplasmic side. Residues 152–172 (VTVMIAIVWVLSFTISCPLLF) traverse the membrane as a helical segment. Residues 173–188 (GLNNTDQNECIIANPA) lie on the Extracellular side of the membrane. The chain crosses the membrane as a helical span at residues 189-213 (FVVYSSIVSFYVPFIVTLLVYIKIY). Residues 211–373 (KIYIVLRRRR…SQQKEKKATQ (163 aa)) form an interaction with PPP1R9B region. At 214 to 373 (IVLRRRRKRV…SQQKEKKATQ (160 aa)) the chain is on the cytoplasmic side. The segment at 282 to 332 (EMLSSTSPPERTRYSPIPPSHHQLTLPDPSHHGLHSTADSPAKPEKNGHAK) is disordered. Basic and acidic residues predominate over residues 323–332 (AKPEKNGHAK). Residues 374–395 (MLAIVLGVFIICWLPFFITHIL) traverse the membrane as a helical segment. Over 396-409 (NIHCECNIPPVLYS) the chain is Extracellular. Residues C399 and C401 are joined by a disulfide bond. The chain crosses the membrane as a helical span at residues 410-431 (AFTWLGYVNSAVNPIIYTTFNI). The Cytoplasmic segment spans residues 432–443 (EFRKAFLKILHC). C443 is lipidated: S-palmitoyl cysteine.

Belongs to the G-protein coupled receptor 1 family. As to quaternary structure, forms homo- and heterooligomers with DRD4. The interaction with DRD4 may modulate agonist-induced downstream signaling. Interacts with CADPS and CADPS2. Interacts with GPRASP1, PPP1R9B and CLIC6. Interacts with ARRB2. Interacts with HTR2A. Interacts with DRD1. Interacts with KCNA2. In terms of processing, palmitoylated. Palmitoylation which is required for proper localization to the plasma membrane and stability of the receptor could be carried on by ZDHHC4, ZDHHC3 and ZDHHC8.

The protein resides in the cell membrane. Its subcellular location is the golgi apparatus membrane. Functionally, dopamine receptor whose activity is mediated by G proteins which inhibit adenylyl cyclase. Positively regulates postnatal regression of retinal hyaloid vessels via suppression of VEGFR2/KDR activity, downstream of OPN5. This chain is D(2) dopamine receptor (DRD2), found in Canis lupus familiaris (Dog).